The following is a 113-amino-acid chain: UPF0251 protein TK0562 (113 aa).

Belongs to the UPF0251 family.

This chain is UPF0251 protein TK0562, found in Thermococcus kodakarensis (strain ATCC BAA-918 / JCM 12380 / KOD1) (Pyrococcus kodakaraensis (strain KOD1)).